Here is a 585-residue protein sequence, read N- to C-terminus: Optineurin (585 aa).

The disordered stretch occupies residues 1–32; the sequence is MSHQPLSCLTEKGDSSCETPGNGPSNMVHPNL. The segment covering 16-25 has biased composition (polar residues); the sequence is SCETPGNGPS. The stretch at 38–181 forms a coiled coil; the sequence is EELLQQMKEL…VSELQLKLNS (144 aa). Positions 58–220 are interaction with Rab8; sequence MKLNNQAMKG…GPTRTDSISM (163 aa). Residues 187-192 carry the LIR motif; the sequence is DSFVEI. Residues Ser-188 and Ser-209 each carry the phosphoserine modification. Disordered regions lie at residues 200 to 220 and 269 to 299; these read EGAMKEMRNSAGPTRTDSISM and FEKKANGHSAIETQTEGSTQKEEEDKDPESV. A coiled-coil region spans residues 244–512; that stretch reads CLREGNQKVE…LLKENNDFED (269 aa). At Ser-346 the chain carries Phosphoserine. An interaction with HD region spans residues 415–585; the sequence is TKQQAEKVDK…LQIHVMDCII (171 aa). The tract at residues 416–525 is interaction with MYO6; that stretch reads KQQAEKVDKV…RQSLMEMQCR (110 aa). The short motif at 478–483 is the UBAN element; the sequence is DFHAER. Ser-531 is modified (phosphoserine). The CCHC NOA-type zinc finger occupies 555 to 585; the sequence is PRSIPIHSCPKCGEVLPDIDTLQIHVMDCII. 4 residues coordinate Zn(2+): Cys-563, Cys-566, His-579, and Cys-583.

As to quaternary structure, self-associates. Interacts with HD. Interacts with GTF3A. Interacts with MYO6. Interacts (via UBAN) with ubiquitinated TFRC. Interacts with GTP-bound Rab8 (RAB8A and/or RAB8B). Interacts with TBC1D17. Interacts with TBK1. Interacts with TRAF3. Binds to linear ubiquitin chains. Interacts with LC3 family members MAP1LC3A, MAP1LC3B, GABARAP, GABARAPL1 and GABARAPL2; OPTN phosphorylation increases the association (at least with MAP1LC3B). Interacts with RAB12; the interaction may be indirect. Interacts with TBK1; this interaction leads to the Golgi localization of TBK1 and its subsequent activation. Interacts with palmitoyltransferase ZDHHC17/HIP14; the interaction does not lead to palmitoylation of OPTN. Interacts with CYLD. Interacts with TOM1; the interaction is indirect and is mediated by MYO6, which acts as a bridge between TOM1 and OPTN. Interacts with USP12; the interaction is independent of USP12 deubiquitinase activity and may be involved in regulation of autophagic flux. Phosphorylated by TBK1, leading to restrict bacterial proliferation in case of infection.

Its subcellular location is the cytoplasm. The protein localises to the perinuclear region. The protein resides in the golgi apparatus. It is found in the trans-Golgi network. It localises to the cytoplasmic vesicle. Its subcellular location is the autophagosome. The protein localises to the recycling endosome. In terms of biological role, plays an important role in the maintenance of the Golgi complex, in membrane trafficking, in exocytosis, through its interaction with myosin VI and Rab8. Links myosin VI to the Golgi complex and plays an important role in Golgi ribbon formation. Negatively regulates the induction of IFNB in response to RNA virus infection. Plays a neuroprotective role in the eye and optic nerve. Probably part of the TNF-alpha signaling pathway that can shift the equilibrium toward induction of cell death. May act by regulating membrane trafficking and cellular morphogenesis via a complex that contains Rab8 and huntingtin (HD). Mediates the interaction of Rab8 with the probable GTPase-activating protein TBC1D17 during Rab8-mediated endocytic trafficking, such as that of transferrin receptor (TFRC/TfR); regulates Rab8 recruitment to tubules emanating from the endocytic recycling compartment. Autophagy receptor that interacts directly with both the cargo to become degraded and an autophagy modifier of the MAP1 LC3 family; targets ubiquitin-coated bacteria (xenophagy) and appears to function in the same pathway as SQSTM1 and CALCOCO2/NDP52. The polypeptide is Optineurin (Optn) (Rattus norvegicus (Rat)).